We begin with the raw amino-acid sequence, 452 residues long: Tubulin beta-2 chain (452 aa).

Positions 11, 74, 143, 147, 148, 149, 209, and 231 each coordinate GTP. Mg(2+) is bound at residue glutamate 74. The segment at 431–452 (QEATADDEAEFEEEGEVEGEYD) is disordered. Positions 434 to 452 (TADDEAEFEEEGEVEGEYD) are enriched in acidic residues.

It belongs to the tubulin family. As to quaternary structure, dimer of alpha and beta chains. A typical microtubule is a hollow water-filled tube with an outer diameter of 25 nm and an inner diameter of 15 nM. Alpha-beta heterodimers associate head-to-tail to form protofilaments running lengthwise along the microtubule wall with the beta-tubulin subunit facing the microtubule plus end conferring a structural polarity. Microtubules usually have 13 protofilaments but different protofilament numbers can be found in some organisms and specialized cells. Mg(2+) is required as a cofactor.

It is found in the cytoplasm. Its subcellular location is the cytoskeleton. Tubulin is the major constituent of microtubules, a cylinder consisting of laterally associated linear protofilaments composed of alpha- and beta-tubulin heterodimers. Microtubules grow by the addition of GTP-tubulin dimers to the microtubule end, where a stabilizing cap forms. Below the cap, tubulin dimers are in GDP-bound state, owing to GTPase activity of alpha-tubulin. The chain is Tubulin beta-2 chain from Homarus americanus (American lobster).